We begin with the raw amino-acid sequence, 160 residues long: Nucleotide-binding protein BAV0791 (160 aa).

It belongs to the YajQ family.

Functionally, nucleotide-binding protein. The polypeptide is Nucleotide-binding protein BAV0791 (Bordetella avium (strain 197N)).